The following is a 263-amino-acid chain: Leucyl/phenylalanyl-tRNA--protein transferase (263 aa).

Belongs to the L/F-transferase family.

It localises to the cytoplasm. The enzyme catalyses N-terminal L-lysyl-[protein] + L-leucyl-tRNA(Leu) = N-terminal L-leucyl-L-lysyl-[protein] + tRNA(Leu) + H(+). It carries out the reaction N-terminal L-arginyl-[protein] + L-leucyl-tRNA(Leu) = N-terminal L-leucyl-L-arginyl-[protein] + tRNA(Leu) + H(+). The catalysed reaction is L-phenylalanyl-tRNA(Phe) + an N-terminal L-alpha-aminoacyl-[protein] = an N-terminal L-phenylalanyl-L-alpha-aminoacyl-[protein] + tRNA(Phe). Functionally, functions in the N-end rule pathway of protein degradation where it conjugates Leu, Phe and, less efficiently, Met from aminoacyl-tRNAs to the N-termini of proteins containing an N-terminal arginine or lysine. This chain is Leucyl/phenylalanyl-tRNA--protein transferase, found in Novosphingobium aromaticivorans (strain ATCC 700278 / DSM 12444 / CCUG 56034 / CIP 105152 / NBRC 16084 / F199).